The chain runs to 581 residues: Transcription activator GAGA (581 aa).

The region spanning 34–99 is the BTB domain; the sequence is VDCTLAAGGR…VYRGEVSVDH (66 aa). The interaction with E(bx) stretch occupies residues 201 to 397; it reads VIQAFLPARK…SSGSGSGALS (197 aa). Thr237 is modified (phosphothreonine). Disordered stretches follow at residues 298-343 and 364-404; these read ITPA…EQPA and LRHF…SVPQ. The C2H2-type; degenerate zinc-finger motif lies at 343–366; it reads ATCPICYAVIRQSRNLRRHLELRH. Positions 381 to 401 are enriched in low complexity; it reads GKKSSSGSSGSGSGALSSSGS.

In terms of assembly, interacts with Bin1, lolal, corto, ttk and ph-p. Interacts with FACT subunits Ssrp and dre4/SPT16. Interacts with E(bx). Upon ecdysone stimulation, interacts with Nup98. In terms of processing, the N-terminus is blocked. In terms of tissue distribution, expressed in the central nervous system throughout development.

It is found in the nucleus. It localises to the chromosome. In terms of biological role, transcriptional activator that functions by regulating chromatin structure. Overcomes the repressive effects of chromatin by promoting the open chromatin conformation in promoter gene regions, thereby allowing access to other transcription factors. Binds to DNA Polycomb response elements (PREs) at the bithorax complex and to the proximal region of the engrailed promoter, and positively regulates transcription of many genes including homeotic ones. Involved in zygotic genome activation (ZGA), a critical event in early embryonic development during which the developmental control passes from maternally provided mRNAs to the expression of the zygotic genome after fertilization. Binds to the DNA sequence (GA)n, with optimal binding to the pentamer 5'-GAGAG-3'. Binds DNA as an oligomer. May also act as a transcriptional repressor, maintaining the repressed state of genes including lolal, and down-regulating its own transcription. Required for dosage compensation in males and may be involved in oogenesis. Also has a role in nuclear division. In Drosophila melanogaster (Fruit fly), this protein is Transcription activator GAGA (Trl).